Here is a 326-residue protein sequence, read N- to C-terminus: MGKIIQLQEEERLRQGKNLLGFSGGVDSTALFFLLLEREIPFDIALVNYHQRAQAKEEESYAKELAHRHQKRCFTLSCPLGPSNFEHQARLERYRFFESLIHQEGYARLLLAHHLGDRLEWLLMRLAQGSSLSTLLGFSSREIRLGYELIRPLGEITKEALYDYLHQHQIRYFEDESNRDPKPLRNRFRPLSETLLKEHAQGLLQSFRFLQEEREILYGEDPRIRRDSLFYFPSQERETQNLHLIDLSLKALGYVMSQGERQELLKSGFCVVLKGKVAIGRSERGIFIAPFERVIIPKAQRERLRIAKIPPKVRPYCFMAGIDSLL.

Position 23–28 (23–28 (SGGVDS)) interacts with ATP.

The protein belongs to the tRNA(Ile)-lysidine synthase family.

It localises to the cytoplasm. It carries out the reaction cytidine(34) in tRNA(Ile2) + L-lysine + ATP = lysidine(34) in tRNA(Ile2) + AMP + diphosphate + H(+). Ligates lysine onto the cytidine present at position 34 of the AUA codon-specific tRNA(Ile) that contains the anticodon CAU, in an ATP-dependent manner. Cytidine is converted to lysidine, thus changing the amino acid specificity of the tRNA from methionine to isoleucine. The chain is tRNA(Ile)-lysidine synthase from Wolinella succinogenes (strain ATCC 29543 / DSM 1740 / CCUG 13145 / JCM 31913 / LMG 7466 / NCTC 11488 / FDC 602W) (Vibrio succinogenes).